The following is a 91-amino-acid chain: Small nuclear ribonucleoprotein F (91 aa).

Positions 8–81 (APKPFLYDLK…VLFVRGIDDE (74 aa)) constitute a Sm domain.

The protein belongs to the snRNP Sm proteins family. SmF/LSm6 subfamily. Core component of the spliceosomal U1, U2, U4 and U5 small nuclear ribonucleoproteins (snRNPs), the building blocks of the spliceosome. Most spliceosomal snRNPs contain a common set of Sm proteins, SNRPB, SNRPD1, SNRPD2, SNRPD3, SNRPE, SNRPF and SNRPG that assemble in a heptameric protein ring on the Sm site of the small nuclear RNA to form the core snRNP. Component of the U1 snRNP. Component of the U4/U6-U5 tri-snRNP complex. Component of the U7 snRNP complex. Component of the U11/U12 snRNPs that are part of the U12-type spliceosome. Part of the SMN-Sm complex that catalyzes core snRNPs assembly.

It localises to the cytoplasm. It is found in the cytosol. The protein resides in the nucleus. Functionally, plays a role in pre-mRNA splicing as a core component of the spliceosomal U1, U2, U4 and U5 small nuclear ribonucleoproteins (snRNPs), the building blocks of the spliceosome. Component of both the pre-catalytic spliceosome B complex and activated spliceosome C complexes. Is also a component of the minor U12 spliceosome. This is Small nuclear ribonucleoprotein F (snrpf) from Dictyostelium discoideum (Social amoeba).